We begin with the raw amino-acid sequence, 397 residues long: Acetate kinase (397 aa).

N8 serves as a coordination point for Mg(2+). Position 15 (K15) interacts with ATP. R89 provides a ligand contact to substrate. D146 acts as the Proton donor/acceptor in catalysis. ATP contacts are provided by residues 206–210 (HLGNG), 281–283 (DLR), and 329–333 (GVGEN). E382 provides a ligand contact to Mg(2+).

Belongs to the acetokinase family. In terms of assembly, homodimer. Mg(2+) serves as cofactor. It depends on Mn(2+) as a cofactor.

The protein resides in the cytoplasm. The enzyme catalyses acetate + ATP = acetyl phosphate + ADP. It participates in metabolic intermediate biosynthesis; acetyl-CoA biosynthesis; acetyl-CoA from acetate: step 1/2. Functionally, catalyzes the formation of acetyl phosphate from acetate and ATP. Can also catalyze the reverse reaction. In Bacillus mycoides (strain KBAB4) (Bacillus weihenstephanensis), this protein is Acetate kinase.